The chain runs to 733 residues: Ribosomal protein S6 kinase alpha-2 (733 aa).

Residues 59 to 318 form the Protein kinase 1 domain; it reads FELLKVLGQG…VEEIKRHPFF (260 aa). ATP is bound by residues 65-73 and Lys91; that span reads LGQGSYGKV. Residue Asp184 is the Proton acceptor of the active site. Residue Ser218 is modified to Phosphoserine; by PDPK1. The AGC-kinase C-terminal domain occupies 319 to 388; it reads VTIDWNKLYR…VASSLVQEPS (70 aa). Ser377 bears the Phosphoserine mark. The 258-residue stretch at 415–672 folds into the Protein kinase 2 domain; it reads YEIKEDIGVG…AVQVLKHPWI (258 aa). Residues 421–429 and Lys444 each bind ATP; that span reads IGVGSYSVC. Asp532 acts as the Proton acceptor in catalysis.

It belongs to the protein kinase superfamily. AGC Ser/Thr protein kinase family. S6 kinase subfamily. In terms of assembly, forms a complex with either MAPK1/ERK2 or MAPK3/ERK1 in quiescent cells. Transiently dissociates following mitogenic stimulation. Interacts with FBXO5; cooperate to induce the metaphase arrest of early blastomeres; increases and stabilizes interaction of FBXO5 with CDC20. Mg(2+) is required as a cofactor. In terms of processing, activated by phosphorylation at Ser-218 by PDPK1. Autophosphorylated on Ser-377, as part of the activation process. May be phosphorylated at Thr-356 and Ser-360 by MAPK1/ERK2 and MAPK3/ERK1. Post-translationally, N-terminal myristoylation results in an activated kinase in the absence of added growth factors.

The protein localises to the nucleus. It localises to the cytoplasm. The enzyme catalyses L-seryl-[protein] + ATP = O-phospho-L-seryl-[protein] + ADP + H(+). It catalyses the reaction L-threonyl-[protein] + ATP = O-phospho-L-threonyl-[protein] + ADP + H(+). Upon extracellular signal or mitogen stimulation, phosphorylated at Thr-570 in the C-terminal kinase domain (CTKD) by MAPK1/ERK2 and MAPK3/ERK1. The activated CTKD then autophosphorylates Ser-377, allowing binding of PDPK1, which in turn phosphorylates Ser-218 in the N-terminal kinase domain (NTDK) leading to the full activation of the protein and subsequent phosphorylation of the substrates by the NTKD. Functionally, serine/threonine-protein kinase that acts downstream of ERK (MAPK1/ERK2 and MAPK3/ERK1) signaling and mediates mitogenic and stress-induced activation of transcription factors, regulates translation, and mediates cellular proliferation, survival, and differentiation. May function as tumor suppressor in epithelial ovarian cancer cells. The chain is Ribosomal protein S6 kinase alpha-2 (Rps6ka2) from Mus musculus (Mouse).